We begin with the raw amino-acid sequence, 474 residues long: Aspartate ammonia-lyase (474 aa).

L-aspartate-binding residues include Thr-105, Ser-144, Thr-145, Asn-146, and Thr-191. An SS loop region spans residues 322–331; that stretch reads GSSIMPGKVN. The active-site Proton acceptor is the Ser-323. Residues Ser-324 and Lys-329 each contribute to the L-aspartate site.

This sequence belongs to the class-II fumarase/aspartase family. Aspartase subfamily. Homotetramer.

The catalysed reaction is L-aspartate = fumarate + NH4(+). It catalyses the reaction L-phenylalanine = (E)-cinnamate + NH4(+). With respect to regulation, does not require any divalent metal ion for activation of catalysis, but the activity is slightly increased in the presence of Mg(2+), Mn(2+), Ca(2+) or Co(2+). Catalyzes the reversible conversion of L-aspartate to fumarate and ammonia. Can also utilize L-phenylalanine to form cinnamic acid. Exhibits the highest specific activity towards L-phenylalanine, but catalytic efficiency is 3-fold higher with L-aspartate. In Pseudomonas aeruginosa (strain ATCC 15692 / DSM 22644 / CIP 104116 / JCM 14847 / LMG 12228 / 1C / PRS 101 / PAO1), this protein is Aspartate ammonia-lyase.